A 320-amino-acid chain; its full sequence is MTAWDGVLPFYPQPRHAASFSVPLLIVILVFLSLAASFLFILPGIRGHSRWFWLVRVLLSLFIGAEIVAVHFSGDWFVGRVWTNTSYKAFSPSRVQVHVGLHVGLAGVNITLRGTPRQQLNETIDYNERFTWRLNEDYTKEYVHALEKGLPDPVLYLAEKFTPSSPCGLYHQYHLAGHYAAATLWVAFCFWIIANALLSMPAPLYGGLALLTTGAFTLFGVFAFASISSVPLCHFRLGSAVLTPYYGASFWLTLATGILSLLLGGAVVILHYTRPSALRSFLDLSVKDCSNQAKGNSPLTLNNPQHEQLKSPDLNITTLL.

The chain crosses the membrane as a helical span at residues 22–42; sequence VPLLIVILVFLSLAASFLFIL. Residues 43–51 lie on the Cytoplasmic side of the membrane; sequence PGIRGHSRW. The chain crosses the membrane as a helical span at residues 52-72; sequence FWLVRVLLSLFIGAEIVAVHF. Over 73-183 the chain is Extracellular; that stretch reads SGDWFVGRVW…HLAGHYAAAT (111 aa). Residues N84, N109, and N121 are each glycosylated (N-linked (GlcNAc...) asparagine). A helical membrane pass occupies residues 184 to 204; it reads LWVAFCFWIIANALLSMPAPL. Residues 205-206 are Cytoplasmic-facing; it reads YG. The helical transmembrane segment at 207 to 227 threads the bilayer; that stretch reads GLALLTTGAFTLFGVFAFASI. At 228–249 the chain is on the extracellular side; that stretch reads SSVPLCHFRLGSAVLTPYYGAS. Residues 250–270 form a helical membrane-spanning segment; the sequence is FWLTLATGILSLLLGGAVVIL. The Cytoplasmic portion of the chain corresponds to 271–320; the sequence is HYTRPSALRSFLDLSVKDCSNQAKGNSPLTLNNPQHEQLKSPDLNITTLL.

This sequence belongs to the DUOXA family. Heterodimer with DUXA2; disulfide-linked. Interacts with CSNK1G2. Post-translationally, N-glycosylated.

Its subcellular location is the endoplasmic reticulum membrane. Functionally, required for the maturation and the transport from the endoplasmic reticulum to the plasma membrane of functional DUOX2. May play a role in thyroid hormone synthesis. The chain is Dual oxidase maturation factor 2 (Duoxa2) from Mus musculus (Mouse).